Here is a 390-residue protein sequence, read N- to C-terminus: Ketoisovalerate reductase BEA2 (390 aa).

70–75 lines the NADP(+) pocket; that stretch reads GPGNIG. Residue K285 is the Proton donor of the active site. N289 and N293 together coordinate substrate.

It belongs to the ketopantoate reductase family.

It carries out the reaction (R)-2-hydroxy-3-methylbutanoate + NADP(+) = 3-methyl-2-oxobutanoate + NADPH + H(+). With respect to regulation, the reductase activity is increased by Mg(2+) (195%), Ca(2+) (169%) and slightly increased by K(+) (123%). The reduction activity is inhibited by Fe(2+) and Co(2+), and almost totally inhibited by Cu(2+), Mn(2+), Zn(2+) and Fe(3+) (from 3% to 9% residual activity respectively). The chelating agent EDTA had little effect, suggesting Mg(2+) and Ca(2+) are not determining factors, though they could promote the reductase enzyme activity. Ketoisovalerate reductase; part of the gene cluster that mediates the biosynthesis of beauvericin (BEA), a non-ribosomal cyclic hexadepsipeptide that shows antibiotic, antifungal, insecticidal, and cancer cell antiproliferative and antihaptotactic activity. Ketoisovalerate reductase BEA2 catalyzes the NADPH-specific reduction of ketoisovaleric acid to hydroxyisovalerate, a precursor for beauvericin biosynthesis. The nonribosomal cyclodepsipeptide synthetase BEA1 then catalyzes the formation of beauvericin via condensation and cyclization of 3 dipeptidol monomers, each composed of one unit of hydroxyisovalerate and one unit of N-methyl-phenylalanine. The sequence is that of Ketoisovalerate reductase BEA2 from Gibberella intermedia (Bulb rot disease fungus).